A 288-amino-acid polypeptide reads, in one-letter code: 33 kDa chaperonin (288 aa).

Disulfide bonds link Cys-235–Cys-237 and Cys-268–Cys-271.

This sequence belongs to the HSP33 family. Under oxidizing conditions two disulfide bonds are formed involving the reactive cysteines. Under reducing conditions zinc is bound to the reactive cysteines and the protein is inactive.

The protein localises to the cytoplasm. Its function is as follows. Redox regulated molecular chaperone. Protects both thermally unfolding and oxidatively damaged proteins from irreversible aggregation. Plays an important role in the bacterial defense system toward oxidative stress. The chain is 33 kDa chaperonin from Streptococcus suis (strain 98HAH33).